Here is a 662-residue protein sequence, read N- to C-terminus: ATP-dependent zinc metalloprotease FtsH (662 aa).

Over residues 1–15 the composition is skewed to basic and acidic residues; the sequence is MSENPVKRPGKDGSR. A disordered region spans residues 1 to 35; the sequence is MSENPVKRPGKDGSRNKFKPVQEEGGTPGWFRSKG. Over 1–39 the chain is Cytoplasmic; that stretch reads MSENPVKRPGKDGSRNKFKPVQEEGGTPGWFRSKGESPQ. Residues 40-60 form a helical membrane-spanning segment; the sequence is GKFPGFLLFLMAGLLMLFVFL. Topologically, residues 61–154 are periplasmic; the sequence is RFFSGTDAPE…LKVEKGSSDL (94 aa). A helical transmembrane segment spans residues 155–175; that stretch reads NTFLALFAPWIIFAALYFFLF. Over 176–662 the chain is Cytoplasmic; it reads RRMSGQNGAQ…QGALPNPVTA (487 aa). 250–257 is a binding site for ATP; that stretch reads GPPGTGKT. Zn(2+) is bound at residue His-472. The active site involves Glu-473. 2 residues coordinate Zn(2+): His-476 and Asp-548.

The protein in the central section; belongs to the AAA ATPase family. It in the C-terminal section; belongs to the peptidase M41 family. As to quaternary structure, homohexamer. The cofactor is Zn(2+).

It is found in the cell inner membrane. Functionally, acts as a processive, ATP-dependent zinc metallopeptidase for both cytoplasmic and membrane proteins. Plays a role in the quality control of integral membrane proteins. The polypeptide is ATP-dependent zinc metalloprotease FtsH (Pelodictyon phaeoclathratiforme (strain DSM 5477 / BU-1)).